Here is a 588-residue protein sequence, read N- to C-terminus: Aspartate--tRNA ligase (588 aa).

An L-aspartate-binding site is contributed by Glu-172. The tract at residues 196–199 (QLFK) is aspartate. Arg-218 provides a ligand contact to L-aspartate. Residues 218-220 (RDE) and Gln-227 each bind ATP. Residue His-449 participates in L-aspartate binding. Glu-483 contacts ATP. Residue Arg-490 coordinates L-aspartate. 535-538 (GLDR) contacts ATP.

This sequence belongs to the class-II aminoacyl-tRNA synthetase family. Type 1 subfamily. As to quaternary structure, homodimer.

The protein resides in the cytoplasm. It catalyses the reaction tRNA(Asp) + L-aspartate + ATP = L-aspartyl-tRNA(Asp) + AMP + diphosphate. Catalyzes the attachment of L-aspartate to tRNA(Asp) in a two-step reaction: L-aspartate is first activated by ATP to form Asp-AMP and then transferred to the acceptor end of tRNA(Asp). This chain is Aspartate--tRNA ligase, found in Haemophilus influenzae (strain PittEE).